The primary structure comprises 1179 residues: RecBCD enzyme subunit RecB (1179 aa).

Residues 1–859 (MVYSDTKTSK…IIQNGKCMNY (859 aa)) are DNA-binding and helicase activity, interacts with RecC. Residues 18–459 (NIMKKKLNIF…YYLDTNWRSS (442 aa)) form the UvrD-like helicase ATP-binding domain. 39–46 (ASAGTGKT) contacts ATP. A UvrD-like helicase C-terminal domain is found at 485-755 (EPILSSSKNL…RIITIHKSKG (271 aa)). A nuclease activity, interacts with RecD and RecA region spans residues 910-1179 (YSQITSFTKI…KLTKLILQKK (270 aa)). Residues H962, D1073, and D1086 each coordinate Mg(2+). D1086 (for nuclease activity) is an active-site residue.

This sequence belongs to the helicase family. UvrD subfamily. In terms of assembly, heterotrimer of RecB, RecC and RecD. All subunits contribute to DNA-binding. Interacts with RecA. It depends on Mg(2+) as a cofactor.

It carries out the reaction Exonucleolytic cleavage (in the presence of ATP) in either 5'- to 3'- or 3'- to 5'-direction to yield 5'-phosphooligonucleotides.. It catalyses the reaction Couples ATP hydrolysis with the unwinding of duplex DNA by translocating in the 3'-5' direction.. The enzyme catalyses ATP + H2O = ADP + phosphate + H(+). Functionally, a helicase/nuclease that prepares dsDNA breaks (DSB) for recombinational DNA repair. Binds to DSBs and unwinds DNA via a highly rapid and processive ATP-dependent bidirectional helicase activity. Unwinds dsDNA until it encounters a Chi (crossover hotspot instigator) sequence from the 3' direction. Cuts ssDNA a few nucleotides 3' to the Chi site. The properties and activities of the enzyme are changed at Chi. The Chi-altered holoenzyme produces a long 3'-ssDNA overhang and facilitates RecA-binding to the ssDNA for homologous DNA recombination and repair. Holoenzyme degrades any linearized DNA that is unable to undergo homologous recombination. In the holoenzyme this subunit contributes ATPase, 3'-5' helicase, exonuclease activity and loads RecA onto ssDNA. The polypeptide is RecBCD enzyme subunit RecB (Buchnera aphidicola subsp. Schizaphis graminum (strain Sg)).